A 64-amino-acid chain; its full sequence is Large ribosomal subunit protein bL28c (64 aa).

Belongs to the bacterial ribosomal protein bL28 family.

The protein resides in the plastid. Its subcellular location is the chloroplast. In Gracilaria tenuistipitata var. liui (Red alga), this protein is Large ribosomal subunit protein bL28c.